We begin with the raw amino-acid sequence, 390 residues long: Homeobox protein Meis1 (390 aa).

Positions 108-191 (GGDVCSSESF…PIDLVIDDRD (84 aa)) constitute an MEIS N-terminal domain. The segment covering 188 to 202 (DDRDGGSKSDSEDLT) has biased composition (basic and acidic residues). The disordered stretch occupies residues 188 to 279 (DDRDGGSKSD…KKRNKGRGIF (92 aa)). The segment at residues 272-334 (RNKGRGIFPK…NARRRIVQPM (63 aa)) is a DNA-binding region (homeobox; TALE-type). Positions 299–329 (YPSEEQKKQLAQDTGLTILQVNNWFINARRR) are interaction with DNA.

The protein belongs to the TALE/MEIS homeobox family. As to quaternary structure, interacts with pbx1 isoform b. As to expression, in the embryo, displays a broad expression pattern with high levels observed in tissues of neural cell fate such as midbrain, hindbrain, dorsal portion of the neural tube, and neural crest-derived branchial arches. Widely expressed in the adult with highest levels in brain and spleen.

The protein localises to the cytoplasm. It localises to the nucleus. Functionally, induces expression of a number of neural crest marker genes as part of a heterodimer with isoform b of pbx1, to specify neural crest cell fate. Binds to a highly conserved region in the promoter of the neural crest marker gene zic3. The sequence is that of Homeobox protein Meis1 (meis1) from Xenopus laevis (African clawed frog).